A 209-amino-acid polypeptide reads, in one-letter code: GTP cyclohydrolase-2 (209 aa).

49–53 (RIHSE) is a GTP binding site. The Zn(2+) site is built by Cys54, Cys65, and Cys67. GTP-binding positions include Gln70, 92–94 (EGR), and Thr114. The active-site Proton acceptor is the Asp126. Catalysis depends on Arg128, which acts as the Nucleophile. Residues Thr149 and Lys154 each coordinate GTP.

It belongs to the GTP cyclohydrolase II family. Requires Zn(2+) as cofactor.

The catalysed reaction is GTP + 4 H2O = 2,5-diamino-6-hydroxy-4-(5-phosphoribosylamino)-pyrimidine + formate + 2 phosphate + 3 H(+). It participates in cofactor biosynthesis; riboflavin biosynthesis; 5-amino-6-(D-ribitylamino)uracil from GTP: step 1/4. In terms of biological role, catalyzes the conversion of GTP to 2,5-diamino-6-ribosylamino-4(3H)-pyrimidinone 5'-phosphate (DARP), formate and pyrophosphate. This chain is GTP cyclohydrolase-2, found in Shewanella pealeana (strain ATCC 700345 / ANG-SQ1).